Consider the following 345-residue polypeptide: Eukaryotic translation initiation factor 3 subunit F (345 aa).

The 137-residue stretch at 30–166 folds into the MPN domain; sequence VVIQPQAIFS…TRAYISAPVG (137 aa). A disordered region spans residues 308 to 345; it reads GGESGGAESGAQRGQRGGKGGRGGQQRNQERGAEEARA. Gly residues predominate over residues 322–331; the sequence is QRGGKGGRGG. The segment covering 335 to 345 has biased composition (basic and acidic residues); the sequence is NQERGAEEARA.

This sequence belongs to the eIF-3 subunit F family. Component of the eukaryotic translation initiation factor 3 (eIF-3) complex.

Its subcellular location is the cytoplasm. Its function is as follows. Component of the eukaryotic translation initiation factor 3 (eIF-3) complex, which is involved in protein synthesis of a specialized repertoire of mRNAs and, together with other initiation factors, stimulates binding of mRNA and methionyl-tRNAi to the 40S ribosome. The eIF-3 complex specifically targets and initiates translation of a subset of mRNAs involved in cell proliferation. This chain is Eukaryotic translation initiation factor 3 subunit F, found in Aspergillus clavatus (strain ATCC 1007 / CBS 513.65 / DSM 816 / NCTC 3887 / NRRL 1 / QM 1276 / 107).